Here is a 178-residue protein sequence, read N- to C-terminus: Meiotically up-regulated gene 95 protein (178 aa).

Residues 1–12 (MNLFVYIAQNPT) are Cytoplasmic-facing. Residues 13-30 (LTKWFFCCVCTILTMPFF) traverse the membrane as a helical; Signal-anchor for type II membrane protein segment. Residues 31–178 (KKPYRKRGIS…ESIEKPENDN (148 aa)) lie on the Lumenal side of the membrane.

The protein resides in the endoplasmic reticulum membrane. Its function is as follows. Has a role in meiosis. This is Meiotically up-regulated gene 95 protein (mug95) from Schizosaccharomyces pombe (strain 972 / ATCC 24843) (Fission yeast).